Reading from the N-terminus, the 382-residue chain is Ribosomal RNA large subunit methyltransferase G (382 aa).

It belongs to the methyltransferase superfamily. RlmG family.

The protein resides in the cytoplasm. It catalyses the reaction guanosine(1835) in 23S rRNA + S-adenosyl-L-methionine = N(2)-methylguanosine(1835) in 23S rRNA + S-adenosyl-L-homocysteine + H(+). Functionally, specifically methylates the guanine in position 1835 (m2G1835) of 23S rRNA. This is Ribosomal RNA large subunit methyltransferase G from Pseudoalteromonas translucida (strain TAC 125).